The primary structure comprises 465 residues: Dihydrolipoyl dehydrogenase (465 aa).

FAD is bound by residues E34–C42, K51, and G114. An intrachain disulfide couples C42 to C47. NAD(+) is bound by residues G180 to I184, E203, V237, and S264 to R267. FAD-binding residues include D307 and A315. The active-site Proton acceptor is H439.

This sequence belongs to the class-I pyridine nucleotide-disulfide oxidoreductase family. FAD serves as cofactor.

It is found in the cytoplasm. The enzyme catalyses N(6)-[(R)-dihydrolipoyl]-L-lysyl-[protein] + NAD(+) = N(6)-[(R)-lipoyl]-L-lysyl-[protein] + NADH + H(+). Functionally, the branched-chain alpha-keto dehydrogenase complex catalyzes the overall conversion of alpha-keto acids to acyl-CoA and CO(2). It contains multiple copies of 3 enzymatic components: branched-chain alpha-keto acid decarboxylase (E1), lipoamide acyltransferase (E2) and lipoamide dehydrogenase (E3). The polypeptide is Dihydrolipoyl dehydrogenase (lpdA) (Chlamydia muridarum (strain MoPn / Nigg)).